The sequence spans 127 residues: Small ribosomal subunit protein uS11 (127 aa).

The protein belongs to the universal ribosomal protein uS11 family. As to quaternary structure, part of the 30S ribosomal subunit. Interacts with proteins S7 and S18. Binds to IF-3.

Its function is as follows. Located on the platform of the 30S subunit, it bridges several disparate RNA helices of the 16S rRNA. Forms part of the Shine-Dalgarno cleft in the 70S ribosome. In Rickettsia canadensis (strain McKiel), this protein is Small ribosomal subunit protein uS11.